A 1028-amino-acid chain; its full sequence is Unconventional myosin-Ic (1028 aa).

M1 carries the post-translational modification N-acetylmethionine. Positions 12-696 (GVQDFVLLEN…TLFATEDALE (685 aa)) constitute a Myosin motor domain. Residues N53, Y61, 104–113 (SGESGAGKTE), and 157–161 (NDNSS) contribute to the ATP site. K348 bears the N6-methyllysine mark. Residues 573 to 595 (LSKLMEILMSKQPSYVRCIKPND) form an actin-binding region. 2 consecutive IQ domains span residues 699-728 (KHSI…SAVE) and 722-751 (MKHS…AVDV). The region spanning 850–1024 (KDNYPQSVPR…NGHLSVVAPR (175 aa)) is the TH1 domain.

This sequence belongs to the TRAFAC class myosin-kinesin ATPase superfamily. Myosin family. As to quaternary structure, interacts (via its IQ motifs) with calmodulin. In terms of tissue distribution, expressed in brain and the sacculus of the internal ear.

It localises to the cytoplasm. The protein localises to the cell membrane. Its subcellular location is the cell projection. It is found in the ruffle membrane. The protein resides in the cytoplasmic vesicle. It localises to the stereocilium membrane. In terms of biological role, myosins are actin-based motor molecules with ATPase activity. Unconventional myosins serve in intracellular movements. Their highly divergent tails are presumed to bind to membranous compartments, which would be moved relative to actin filaments. In Aquarana catesbeiana (American bullfrog), this protein is Unconventional myosin-Ic (Myo1c).